Reading from the N-terminus, the 363-residue chain is Flagellar P-ring protein (363 aa).

The first 20 residues, 1-20, serve as a signal peptide directing secretion; that stretch reads MKYKLVLAVAVLVFSLPSQA.

Belongs to the FlgI family. As to quaternary structure, the basal body constitutes a major portion of the flagellar organelle and consists of four rings (L,P,S, and M) mounted on a central rod.

Its subcellular location is the periplasm. It is found in the bacterial flagellum basal body. Assembles around the rod to form the L-ring and probably protects the motor/basal body from shearing forces during rotation. The chain is Flagellar P-ring protein from Shewanella baltica (strain OS223).